The following is a 215-amino-acid chain: Polysialic acid O-acetyltransferase (215 aa).

Residues 119-121, R148, K154, S166, 171-172, and K190 contribute to the acetyl-CoA site; these read DMH and YK.

This sequence belongs to the transferase hexapeptide repeat family. As to quaternary structure, homotrimer.

It catalyses the reaction [(2-&gt;6)-alpha-D-glucosyl-(1-&gt;4)-N-acetyl-alpha-D-neuraminosyl](n) + n acetyl-CoA = [(2-&gt;6)-alpha-D-glucosyl-(1-&gt;4)-N,7-O-diacetyl-alpha-D-neuraminosyl](n) + n CoA. It carries out the reaction [(2-&gt;6)-alpha-D-glucosyl-(1-&gt;4)-N-acetyl-alpha-D-neuraminosyl](n) + n acetyl-CoA = [(2-&gt;6)-alpha-D-glucosyl-(1-&gt;4)-N,O(9)-diacetyl-alpha-D-neuraminosyl](n) + n CoA. Catalyzes the O-acetylation of capsular polymeric sialic acid consisting of polymers of (2-&gt;6)-alpha-D-glucosyl-(1-&gt;4)-N-acetyl-alpha-D-neuraminosyl residues. Shows high substrate specificity toward polymers of sialic acid that contains a large number of residues. The sequence is that of Polysialic acid O-acetyltransferase from Neisseria meningitidis.